The chain runs to 64 residues: Beta-defensin 5 (64 aa).

A signal peptide spans methionine 1–serine 23. 3 cysteine pairs are disulfide-bonded: cysteine 32-cysteine 60, cysteine 39-cysteine 53, and cysteine 43-cysteine 61.

The protein belongs to the beta-defensin family.

Its subcellular location is the secreted. Has antibacterial activity. The polypeptide is Beta-defensin 5 (Defb5) (Mus musculus (Mouse)).